The chain runs to 334 residues: GTP 3',8-cyclase (334 aa).

Residues 11–235 enclose the Radical SAM core domain; that stretch reads GFNRKVDYLR…VESAESSQGP (225 aa). Residue R20 participates in GTP binding. The [4Fe-4S] cluster site is built by C27 and C31. S-adenosyl-L-methionine is bound at residue Y33. C34 lines the [4Fe-4S] cluster pocket. R69 contacts GTP. Position 73 (G73) interacts with S-adenosyl-L-methionine. A GTP-binding site is contributed by T100. S124 contacts S-adenosyl-L-methionine. K161 serves as a coordination point for GTP. Position 195 (M195) interacts with S-adenosyl-L-methionine. The [4Fe-4S] cluster site is built by C260 and C263. 265-267 contributes to the GTP binding site; the sequence is RVR. Residue C277 coordinates [4Fe-4S] cluster.

This sequence belongs to the radical SAM superfamily. MoaA family. Monomer and homodimer. Requires [4Fe-4S] cluster as cofactor.

It carries out the reaction GTP + AH2 + S-adenosyl-L-methionine = (8S)-3',8-cyclo-7,8-dihydroguanosine 5'-triphosphate + 5'-deoxyadenosine + L-methionine + A + H(+). It functions in the pathway cofactor biosynthesis; molybdopterin biosynthesis. Functionally, catalyzes the cyclization of GTP to (8S)-3',8-cyclo-7,8-dihydroguanosine 5'-triphosphate. The protein is GTP 3',8-cyclase of Pseudomonas entomophila (strain L48).